Here is a 249-residue protein sequence, read N- to C-terminus: CDP-diacylglycerol pyrophosphatase (249 aa).

Residues 5-25 (GYFLLAVIVIVAAAGVGYWKF) form a helical membrane-spanning segment.

This sequence belongs to the Cdh family.

Its subcellular location is the cell inner membrane. It carries out the reaction a CDP-1,2-diacyl-sn-glycerol + H2O = a 1,2-diacyl-sn-glycero-3-phosphate + CMP + 2 H(+). The protein operates within phospholipid metabolism; CDP-diacylglycerol degradation; phosphatidate from CDP-diacylglycerol: step 1/1. The polypeptide is CDP-diacylglycerol pyrophosphatase (Salmonella arizonae (strain ATCC BAA-731 / CDC346-86 / RSK2980)).